Reading from the N-terminus, the 423-residue chain is Lysosomal acid phosphatase (423 aa).

The signal sequence occupies residues 1–30 (MAGKRSGWSRAALLQLLLGVNLVVMPPTRA). Over 31 to 380 (RSLRFVTLLY…QLASGPADTE (350 aa)) the chain is Lumenal. The active-site Nucleophile is H42. Residues N92, N133, N167, N177, N191, and N267 are each glycosylated (N-linked (GlcNAc...) asparagine). Intrachain disulfides connect C159–C370, C212–C310, and C345–C349. D287 serves as the catalytic Proton donor. N-linked (GlcNAc...) asparagine glycans are attached at residues N322 and N331. Residues 381 to 401 (VIVALAVCGSILFLLIVLLLT) form a helical membrane-spanning segment. Residues 402-423 (VLFRMQAQPPGYRHVADGEDHA) are Cytoplasmic-facing.

Belongs to the histidine acid phosphatase family. The membrane-bound form is converted to the soluble form by sequential proteolytic processing. First, the C-terminal cytoplasmic tail is removed. Cleavage by a lysosomal protease releases the soluble form in the lysosome lumen. Post-translationally, N-glycosylated. The intermediates formed during enzymatic deglycosylation suggest that all eight predicted N-glycosylation sites are used.

Its subcellular location is the lysosome membrane. It localises to the lysosome lumen. The catalysed reaction is a phosphate monoester + H2O = an alcohol + phosphate. This chain is Lysosomal acid phosphatase (ACP2), found in Homo sapiens (Human).